Consider the following 294-residue polypeptide: Phosphatidylglycerol--prolipoprotein diacylglyceryl transferase (294 aa).

7 helical membrane passes run 19 to 39 (VFGF…GIVL), 69 to 89 (LLTW…VFFY), 101 to 121 (ILAV…VIAA), 139 to 159 (IMAL…FINA), 195 to 215 (QLYE…WLVW), 224 to 244 (GYVA…VEFF), and 267 to 287 (WGLT…IWLI). Arginine 152 lines the a 1,2-diacyl-sn-glycero-3-phospho-(1'-sn-glycerol) pocket.

The protein belongs to the Lgt family.

The protein localises to the cell inner membrane. It catalyses the reaction L-cysteinyl-[prolipoprotein] + a 1,2-diacyl-sn-glycero-3-phospho-(1'-sn-glycerol) = an S-1,2-diacyl-sn-glyceryl-L-cysteinyl-[prolipoprotein] + sn-glycerol 1-phosphate + H(+). Its pathway is protein modification; lipoprotein biosynthesis (diacylglyceryl transfer). Catalyzes the transfer of the diacylglyceryl group from phosphatidylglycerol to the sulfhydryl group of the N-terminal cysteine of a prolipoprotein, the first step in the formation of mature lipoproteins. This chain is Phosphatidylglycerol--prolipoprotein diacylglyceryl transferase, found in Roseobacter denitrificans (strain ATCC 33942 / OCh 114) (Erythrobacter sp. (strain OCh 114)).